We begin with the raw amino-acid sequence, 110 residues long: Large ribosomal subunit protein uL22 (110 aa).

Belongs to the universal ribosomal protein uL22 family. In terms of assembly, part of the 50S ribosomal subunit.

This protein binds specifically to 23S rRNA; its binding is stimulated by other ribosomal proteins, e.g. L4, L17, and L20. It is important during the early stages of 50S assembly. It makes multiple contacts with different domains of the 23S rRNA in the assembled 50S subunit and ribosome. Functionally, the globular domain of the protein is located near the polypeptide exit tunnel on the outside of the subunit, while an extended beta-hairpin is found that lines the wall of the exit tunnel in the center of the 70S ribosome. This is Large ribosomal subunit protein uL22 from Methylococcus capsulatus (strain ATCC 33009 / NCIMB 11132 / Bath).